A 261-amino-acid chain; its full sequence is Succinate dehydrogenase iron-sulfur subunit (261 aa).

A 2Fe-2S ferredoxin-type domain is found at 28-119 (RKVKVYRYDP…DIKIYPLPHM (92 aa)). Cys-80, Cys-85, and Cys-100 together coordinate [2Fe-2S] cluster. The 4Fe-4S ferredoxin-type domain maps to 161–191 (DREKLDGLYECILCACCSTSCPSYWWNGDKY). Positions 171, 174, and 177 each coordinate [4Fe-4S] cluster. Residue Cys-181 participates in [3Fe-4S] cluster binding. Trp-186 is an a ubiquinone binding site. Residues Cys-228 and Cys-234 each contribute to the [3Fe-4S] cluster site. Position 238 (Cys-238) interacts with [4Fe-4S] cluster.

This sequence belongs to the succinate dehydrogenase/fumarate reductase iron-sulfur protein family. As to quaternary structure, part of an enzyme complex containing four subunits: a flavoprotein, an iron-sulfur, cytochrome b-556, and a hydrophobic anchor protein. The cofactor is [2Fe-2S] cluster. [3Fe-4S] cluster is required as a cofactor. [4Fe-4S] cluster serves as cofactor.

The enzyme catalyses a quinone + succinate = fumarate + a quinol. The protein operates within carbohydrate metabolism; tricarboxylic acid cycle; fumarate from succinate (bacterial route): step 1/1. The protein is Succinate dehydrogenase iron-sulfur subunit (sdhB) of Rickettsia prowazekii (strain Madrid E).